We begin with the raw amino-acid sequence, 78 residues long: 4-methyl-3-hydroxyanthranilic acid carrier protein (78 aa).

Position 33 is an O-(pantetheine 4'-phosphoryl)serine (Ser-33).

Belongs to the acyl carrier protein (ACP) family. Post-translationally, 4'-phosphopantetheine is transferred from CoA to a specific serine of the apo-form of this carrier protein.

Its pathway is antibiotic biosynthesis. Functionally, involved in the biosynthesis of actinomycin. Acts as a carrier in the transfer and thioesterification of 4-methyl-3-hydroxyanthranilic acid (4-MHA). This chain is 4-methyl-3-hydroxyanthranilic acid carrier protein, found in Streptomyces anulatus (Streptomyces chrysomallus).